A 193-amino-acid polypeptide reads, in one-letter code: Adenine phosphoribosyltransferase (193 aa).

Belongs to the purine/pyrimidine phosphoribosyltransferase family. As to quaternary structure, homodimer.

It is found in the cytoplasm. The enzyme catalyses AMP + diphosphate = 5-phospho-alpha-D-ribose 1-diphosphate + adenine. It functions in the pathway purine metabolism; AMP biosynthesis via salvage pathway; AMP from adenine: step 1/1. Functionally, catalyzes a salvage reaction resulting in the formation of AMP, that is energically less costly than de novo synthesis. This Bifidobacterium adolescentis (strain ATCC 15703 / DSM 20083 / NCTC 11814 / E194a) protein is Adenine phosphoribosyltransferase.